We begin with the raw amino-acid sequence, 500 residues long: L-arabinose isomerase (500 aa).

Mn(2+)-binding residues include Glu306, Glu333, His350, and His450.

It belongs to the arabinose isomerase family. Homohexamer. Mn(2+) is required as a cofactor.

The enzyme catalyses beta-L-arabinopyranose = L-ribulose. It participates in carbohydrate degradation; L-arabinose degradation via L-ribulose; D-xylulose 5-phosphate from L-arabinose (bacterial route): step 1/3. Functionally, catalyzes the conversion of L-arabinose to L-ribulose. In Escherichia coli O7:K1 (strain IAI39 / ExPEC), this protein is L-arabinose isomerase.